Here is a 406-residue protein sequence, read N- to C-terminus: 4-hydroxy-3-methylbut-2-enyl diphosphate reductase (406 aa).

Cys66 lines the [4Fe-4S] cluster pocket. His96 contacts (2E)-4-hydroxy-3-methylbut-2-enyl diphosphate. Residue His96 participates in dimethylallyl diphosphate binding. Isopentenyl diphosphate is bound at residue His96. Residue Cys157 participates in [4Fe-4S] cluster binding. Residue His185 participates in (2E)-4-hydroxy-3-methylbut-2-enyl diphosphate binding. Residue His185 participates in dimethylallyl diphosphate binding. Residue His185 coordinates isopentenyl diphosphate. Catalysis depends on Glu187, which acts as the Proton donor. (2E)-4-hydroxy-3-methylbut-2-enyl diphosphate is bound at residue Thr250. Cys288 is a binding site for [4Fe-4S] cluster. 4 residues coordinate (2E)-4-hydroxy-3-methylbut-2-enyl diphosphate: Ser317, Ser318, Asn319, and Ser379. Dimethylallyl diphosphate-binding residues include Ser317, Ser318, Asn319, and Ser379. Ser317, Ser318, Asn319, and Ser379 together coordinate isopentenyl diphosphate.

It belongs to the IspH family. [4Fe-4S] cluster is required as a cofactor.

It catalyses the reaction isopentenyl diphosphate + 2 oxidized [2Fe-2S]-[ferredoxin] + H2O = (2E)-4-hydroxy-3-methylbut-2-enyl diphosphate + 2 reduced [2Fe-2S]-[ferredoxin] + 2 H(+). It carries out the reaction dimethylallyl diphosphate + 2 oxidized [2Fe-2S]-[ferredoxin] + H2O = (2E)-4-hydroxy-3-methylbut-2-enyl diphosphate + 2 reduced [2Fe-2S]-[ferredoxin] + 2 H(+). It participates in isoprenoid biosynthesis; dimethylallyl diphosphate biosynthesis; dimethylallyl diphosphate from (2E)-4-hydroxy-3-methylbutenyl diphosphate: step 1/1. It functions in the pathway isoprenoid biosynthesis; isopentenyl diphosphate biosynthesis via DXP pathway; isopentenyl diphosphate from 1-deoxy-D-xylulose 5-phosphate: step 6/6. In terms of biological role, catalyzes the conversion of 1-hydroxy-2-methyl-2-(E)-butenyl 4-diphosphate (HMBPP) into a mixture of isopentenyl diphosphate (IPP) and dimethylallyl diphosphate (DMAPP). Acts in the terminal step of the DOXP/MEP pathway for isoprenoid precursor biosynthesis. This chain is 4-hydroxy-3-methylbut-2-enyl diphosphate reductase, found in Synechococcus sp. (strain RCC307).